The sequence spans 139 residues: Non-structural protein 1 (139 aa).

Positions 136-139 match the DLNP; interaction with MAP1B motif; it reads DLNS.

It belongs to the pneumovirus non-structural protein 1 family. As to quaternary structure, monomer. Homomultimer. Heteromultimer with NS2. Interacts with the matrix protein M. Interacts with host ELOC and CUL2; this interaction allows NS1 to form an active E3 ligase with ELOC and CUL2. Interacts with host IRF3; this interaction leads to the disrupted association of IRF3 with CREBBP and thus reduced binding of IRF3 to the IFN-beta promoter. Interacts with host MAVS; this interaction prevents MAVS binding to RIGI and inhibits signaling pathway leading to interferon production. Interacts with host MAP1B/microtubule-associated protein 1B. Interacts with host TRIM25 (via SPRY domain); this interaction suppresses RIGI ubiquitination and results in decreased interaction between RIGI and MAVS.

The protein resides in the host cytoplasm. Its subcellular location is the host mitochondrion. The protein localises to the host nucleus. Plays a major role in antagonizing the type I IFN-mediated antiviral response by degrading or inhibiting multiple cellular factors required for either IFN induction or response pathways. Acts cooperatively with NS2 to repress activation and nuclear translocation of host IFN-regulatory factor IRF3. Also disrupts the association of IRF3 with CREBBP. Interacts with host mitochondrial-associated membrane (MAM) MAVS and prevents the interaction with RIGI. Interacts with TRIM25 to suppress TRIM25-mediated RIGI ubiquitination and thereby RIGI-MAVS interaction. Together with NS2, participates in the proteasomal degradation of host STAT2, IRF3, IRF7, TBK1 and RIGI through a NS-degradasome involving CUL2 and Elongin-C. The degradasome requires an intact mitochondrial MAVS. Decreases the levels of host TRAF3 and IKBKE/IKK-epsilon. As functions other than disruptions of the type I IFN-mediated antiviral signaling pathways, induces host SOCS1 and SOCS3 expression. Suppresses premature apoptosis by an NF-kappa-B-dependent, interferon-independent mechanism and thus facilitates virus growth. Additionally, NS1 may serve some inhibitory role in viral transcription and RNA replication. Suppresses proliferation and activation of host CD103+ CD8+ cytotoxic T-lymphocytes and Th17 helper T-lymphocytes. This Homo sapiens (Human) protein is Non-structural protein 1 (1C).